A 32-amino-acid polypeptide reads, in one-letter code: Cyclotide Hyfl-B (32 aa).

A cross-link (cyclopeptide (Gly-Asn)) is located at residues 1-32 (GSPIQCAETCFIGKCYTEELGCTCTAFLCMKN). 3 disulfide bridges follow: cysteine 6–cysteine 22, cysteine 10–cysteine 24, and cysteine 15–cysteine 29.

This sequence belongs to the cyclotide family. Moebius subfamily. This is a cyclic peptide.

Functionally, probably participates in a plant defense mechanism. This is Cyclotide Hyfl-B from Hybanthus floribundus (Greenviolet).